Consider the following 224-residue polypeptide: Cytidylate kinase (224 aa).

12 to 20 is a binding site for ATP; that stretch reads GPAGAGKST.

It belongs to the cytidylate kinase family. Type 1 subfamily.

Its subcellular location is the cytoplasm. It catalyses the reaction CMP + ATP = CDP + ADP. The catalysed reaction is dCMP + ATP = dCDP + ADP. This is Cytidylate kinase from Caldanaerobacter subterraneus subsp. tengcongensis (strain DSM 15242 / JCM 11007 / NBRC 100824 / MB4) (Thermoanaerobacter tengcongensis).